The chain runs to 380 residues: Crotonobetainyl-CoA reductase (380 aa).

The protein belongs to the acyl-CoA dehydrogenase family. In terms of assembly, homotetramer. FAD serves as cofactor.

The protein localises to the cytoplasm. It carries out the reaction 4-(trimethylamino)butanoyl-CoA + oxidized [electron-transfer flavoprotein] + H(+) = crotonobetainyl-CoA + reduced [electron-transfer flavoprotein]. It participates in amine and polyamine metabolism; carnitine metabolism. Functionally, catalyzes the reduction of crotonobetainyl-CoA to gamma-butyrobetainyl-CoA. The protein is Crotonobetainyl-CoA reductase of Citrobacter koseri (strain ATCC BAA-895 / CDC 4225-83 / SGSC4696).